The primary structure comprises 164 residues: Protein-export protein SecB (164 aa).

It belongs to the SecB family. Homotetramer, a dimer of dimers. One homotetramer interacts with 1 SecA dimer.

It localises to the cytoplasm. Functionally, one of the proteins required for the normal export of preproteins out of the cell cytoplasm. It is a molecular chaperone that binds to a subset of precursor proteins, maintaining them in a translocation-competent state. It also specifically binds to its receptor SecA. The sequence is that of Protein-export protein SecB from Chromohalobacter salexigens (strain ATCC BAA-138 / DSM 3043 / CIP 106854 / NCIMB 13768 / 1H11).